Here is a 294-residue protein sequence, read N- to C-terminus: 4-hydroxybenzoate octaprenyltransferase (294 aa).

The next 7 membrane-spanning stretches (helical) occupy residues 37-57 (LWAMWMAAGGPPGWTLFWIFF), 101-121 (LAVAAVLALIALALILPLNAL), 142-162 (FFAIPQAYLGIAFGFGIPMAF), 169-189 (VPFVAWLMLLANVFWAIAYDT), 219-239 (IMICYAVFLGLMAWAGSLLGL), 241-261 (WPYYAGLVAAAGMAGYHYTLI), and 271-293 (AAFRHNNWLGACVFAGTFVAYLL).

The protein belongs to the UbiA prenyltransferase family. The cofactor is Mg(2+).

Its subcellular location is the cell inner membrane. The enzyme catalyses all-trans-octaprenyl diphosphate + 4-hydroxybenzoate = 4-hydroxy-3-(all-trans-octaprenyl)benzoate + diphosphate. The protein operates within cofactor biosynthesis; ubiquinone biosynthesis. Functionally, catalyzes the prenylation of para-hydroxybenzoate (PHB) with an all-trans polyprenyl group. Mediates the second step in the final reaction sequence of ubiquinone-8 (UQ-8) biosynthesis, which is the condensation of the polyisoprenoid side chain with PHB, generating the first membrane-bound Q intermediate 3-octaprenyl-4-hydroxybenzoate. In Cupriavidus metallidurans (strain ATCC 43123 / DSM 2839 / NBRC 102507 / CH34) (Ralstonia metallidurans), this protein is 4-hydroxybenzoate octaprenyltransferase.